Here is a 490-residue protein sequence, read N- to C-terminus: MATEFIKSCCGGCFYGETEKHNFSVERDFKAAVPNSQNATISVPPLTSVSVKPQLGCTEDYLLSKLPSDGKEVPFVVPKFKLSYIQPRTQETPSHLEELEGSARASFGDRKVELSSSSQHGPSYDVYNPFYMYQHISPDLSRRFPPRSEVKRLYGSVCDLRTNKLPGSPGLSKSMFDLTNSSQRFIQRHDSLSSVPSSSSSRKNSQGSNRSLDTITLSGDERDFGRLNVKLFYNSSVEQIWITVLQCRDLSWPSSYGDTPTVSIKGILTLPKPVHFKSSAKEGSNAIEFMETFVFAIKLQNLQTVRLVFKIQTQTPRKKTIGECSMSLRTLSTQEMDYSLDITPPSKISVCHAELELGTCFQAVNSRIQLQILEARYLPSSSTPLTLSFFVKVGMFSSGELIYKKKTRLLKASNGRVKWGETMIFPLIQSEKEIVFLIKLYSRSSVRRKHFVGQIWISEDSNNIEAVNQWKETVINPEKVVIRWHKLNPS.

Residues Ser83, Ser156, Ser168, Ser174, and Ser211 each carry the phosphoserine modification. Positions 189–215 are disordered; the sequence is HDSLSSVPSSSSSRKNSQGSNRSLDTI. Residues 192–211 show a composition bias toward low complexity; sequence LSSVPSSSSSRKNSQGSNRS. A phosphothreonine mark is found at Thr214 and Thr216. At Ser218 the chain carries Phosphoserine. 2 C2 domains span residues 223–342 and 344–471; these read DFGR…SLDI and PPSK…NQWK. A Nuclear localization signal motif is present at residues 447-449; it reads RRK.

It localises to the nucleus. This is Tandem C2 domains nuclear protein (TC2N) from Homo sapiens (Human).